The sequence spans 194 residues: Protein GrpE (194 aa).

It belongs to the GrpE family. Homodimer.

It is found in the cytoplasm. In terms of biological role, participates actively in the response to hyperosmotic and heat shock by preventing the aggregation of stress-denatured proteins, in association with DnaK and GrpE. It is the nucleotide exchange factor for DnaK and may function as a thermosensor. Unfolded proteins bind initially to DnaJ; upon interaction with the DnaJ-bound protein, DnaK hydrolyzes its bound ATP, resulting in the formation of a stable complex. GrpE releases ADP from DnaK; ATP binding to DnaK triggers the release of the substrate protein, thus completing the reaction cycle. Several rounds of ATP-dependent interactions between DnaJ, DnaK and GrpE are required for fully efficient folding. The polypeptide is Protein GrpE (Aliivibrio fischeri (strain MJ11) (Vibrio fischeri)).